Consider the following 399-residue polypeptide: DNA primase DnaG (399 aa).

The 87-residue stretch at 182-268 (DAIIVVEGRA…EVEDLTQKEI (87 aa)) folds into the Toprim domain. 3 residues coordinate Mg(2+): glutamate 188, aspartate 230, and aspartate 232.

The protein belongs to the archaeal DnaG primase family. In terms of assembly, forms a ternary complex with MCM helicase and DNA. Component of the archaeal exosome complex. It depends on Mg(2+) as a cofactor.

It carries out the reaction ssDNA + n NTP = ssDNA/pppN(pN)n-1 hybrid + (n-1) diphosphate.. Functionally, RNA polymerase that catalyzes the synthesis of short RNA molecules used as primers for DNA polymerase during DNA replication. Also part of the exosome, which is a complex involved in RNA degradation. Acts as a poly(A)-binding protein that enhances the interaction between heteromeric, adenine-rich transcripts and the exosome. This is DNA primase DnaG from Archaeoglobus fulgidus (strain ATCC 49558 / DSM 4304 / JCM 9628 / NBRC 100126 / VC-16).